Reading from the N-terminus, the 558-residue chain is Dihydroxy-acid dehydratase (558 aa).

A Mg(2+)-binding site is contributed by D78. Position 119 (C119) interacts with [2Fe-2S] cluster. Residues D120 and K121 each contribute to the Mg(2+) site. K121 bears the N6-carboxylysine mark. C192 serves as a coordination point for [2Fe-2S] cluster. A Mg(2+)-binding site is contributed by E446. S472 acts as the Proton acceptor in catalysis.

It belongs to the IlvD/Edd family. Homodimer. [2Fe-2S] cluster is required as a cofactor. Mg(2+) serves as cofactor.

It carries out the reaction (2R)-2,3-dihydroxy-3-methylbutanoate = 3-methyl-2-oxobutanoate + H2O. The enzyme catalyses (2R,3R)-2,3-dihydroxy-3-methylpentanoate = (S)-3-methyl-2-oxopentanoate + H2O. It participates in amino-acid biosynthesis; L-isoleucine biosynthesis; L-isoleucine from 2-oxobutanoate: step 3/4. It functions in the pathway amino-acid biosynthesis; L-valine biosynthesis; L-valine from pyruvate: step 3/4. Its function is as follows. Functions in the biosynthesis of branched-chain amino acids. Catalyzes the dehydration of (2R,3R)-2,3-dihydroxy-3-methylpentanoate (2,3-dihydroxy-3-methylvalerate) into 2-oxo-3-methylpentanoate (2-oxo-3-methylvalerate) and of (2R)-2,3-dihydroxy-3-methylbutanoate (2,3-dihydroxyisovalerate) into 2-oxo-3-methylbutanoate (2-oxoisovalerate), the penultimate precursor to L-isoleucine and L-valine, respectively. This is Dihydroxy-acid dehydratase from Campylobacter jejuni subsp. jejuni serotype O:23/36 (strain 81-176).